The chain runs to 62 residues: Endoregulin (62 aa).

Residues 25–45 (LAVIILFITAVLLLILFAIVF) form a helical membrane-spanning segment.

In terms of assembly, homooligomer. Can also form heterooligomers with other sarcoplasmic/endoplasmic reticulum calcium ATPase (SERCA) regulators ARLN, PLN, SLN and STRIT1/DWORF. Monomer. Interacts as a monomer with ATP2A2/SERCA2; the interaction results in inhibition of ATP2A2 Ca(2+) affinity.

The protein localises to the endoplasmic reticulum membrane. Inhibits the activity of the calcium ATPases ATP2A2/SERCA2 and ATP2A3/SERCA3 by decreasing their apparent affinity for Ca(2+). This Homo sapiens (Human) protein is Endoregulin.